We begin with the raw amino-acid sequence, 163 residues long: General stress protein 16O (163 aa).

Over residues 19 to 30 the composition is skewed to basic and acidic residues; the sequence is QKELSGEKKETE. 2 disordered regions span residues 19-55 and 115-163; these read QKEL…TLVT and ADVE…QDSK. A dksA C4-type; degenerate zinc finger spans residues 89 to 123; sequence CEKTGQEIPYERLEAVPYARMTVEAQADVEDDLET. Residues 127–146 are compositionally biased toward basic and acidic residues; sequence SYEREFHEQVKDLSNKETID.

The polypeptide is General stress protein 16O (yocK) (Bacillus subtilis (strain 168)).